A 505-amino-acid chain; its full sequence is Lysine--tRNA ligase (505 aa).

The segment covering 1–11 (MSDQQLDQPSL) has biased composition (polar residues). The segment at 1–23 (MSDQQLDQPSLSHEERQHEENKL) is disordered. Basic and acidic residues predominate over residues 12 to 23 (SHEERQHEENKL). Residues E415 and E422 each contribute to the Mg(2+) site.

Belongs to the class-II aminoacyl-tRNA synthetase family. In terms of assembly, homodimer. It depends on Mg(2+) as a cofactor.

The protein localises to the cytoplasm. It carries out the reaction tRNA(Lys) + L-lysine + ATP = L-lysyl-tRNA(Lys) + AMP + diphosphate. The protein is Lysine--tRNA ligase of Ectopseudomonas mendocina (strain ymp) (Pseudomonas mendocina).